Here is a 209-residue protein sequence, read N- to C-terminus: Large ribosomal subunit protein uL4 (209 aa).

Belongs to the universal ribosomal protein uL4 family. Part of the 50S ribosomal subunit.

In terms of biological role, one of the primary rRNA binding proteins, this protein initially binds near the 5'-end of the 23S rRNA. It is important during the early stages of 50S assembly. It makes multiple contacts with different domains of the 23S rRNA in the assembled 50S subunit and ribosome. Its function is as follows. Forms part of the polypeptide exit tunnel. In Borrelia duttonii (strain Ly), this protein is Large ribosomal subunit protein uL4.